We begin with the raw amino-acid sequence, 109 residues long: Class I hydrophobin G (109 aa).

Positions 1–19 are cleaved as a signal peptide; the sequence is MRLSILSVFSLVGAGMVSA. Cystine bridges form between Cys-36–Cys-90, Cys-42–Cys-84, Cys-43–Cys-76, and Cys-91–Cys-105.

Belongs to the fungal hydrophobin family.

It is found in the secreted. Its subcellular location is the cell wall. Functionally, aerial growth, conidiation, and dispersal of filamentous fungi in the environment rely upon a capability of their secreting small amphipathic proteins called hydrophobins (HPBs) with low sequence identity. Class I can self-assemble into an outermost layer of rodlet bundles on aerial cell surfaces, conferring cellular hydrophobicity that supports fungal growth, development and dispersal; whereas Class II form highly ordered films at water-air interfaces through intermolecular interactions but contribute nothing to the rodlet structure. In P.expansum, hydrophobins contribute to germination, tolerance to cold stress and mycotoxins patulin and citrinin production. The chain is Class I hydrophobin G from Penicillium expansum (Blue mold rot fungus).